A 440-amino-acid polypeptide reads, in one-letter code: C4-dicarboxylate transport protein (440 aa).

Helical transmembrane passes span Leu8–Ala28, Phe40–Ile60, Leu74–Val94, Gly147–Lys167, Ile187–Val207, Leu221–Leu241, Val288–Leu308, and Ala354–Val374. A disordered region spans residues Glu419–Gly440.

It belongs to the dicarboxylate/amino acid:cation symporter (DAACS) (TC 2.A.23) family.

Its subcellular location is the cell inner membrane. In terms of biological role, responsible for the transport of dicarboxylates such as succinate, fumarate, and malate from the periplasm across the membrane. The chain is C4-dicarboxylate transport protein from Anaeromyxobacter dehalogenans (strain 2CP-1 / ATCC BAA-258).